Consider the following 68-residue polypeptide: Large ribosomal subunit protein uL30 (68 aa).

This sequence belongs to the universal ribosomal protein uL30 family. Part of the 50S ribosomal subunit.

In Paenarthrobacter aurescens (strain TC1), this protein is Large ribosomal subunit protein uL30.